The sequence spans 235 residues: Bypass of stop codon protein 2 (235 aa).

Residues F68–I88 traverse the membrane as a helical segment. S177 is subject to Phosphoserine.

The protein localises to the lipid droplet. It localises to the membrane. The chain is Bypass of stop codon protein 2 (BSC2) from Saccharomyces cerevisiae (strain ATCC 204508 / S288c) (Baker's yeast).